A 201-amino-acid polypeptide reads, in one-letter code: 3-isopropylmalate dehydratase small subunit (201 aa).

The protein belongs to the LeuD family. LeuD type 1 subfamily. Heterodimer of LeuC and LeuD.

The enzyme catalyses (2R,3S)-3-isopropylmalate = (2S)-2-isopropylmalate. Its pathway is amino-acid biosynthesis; L-leucine biosynthesis; L-leucine from 3-methyl-2-oxobutanoate: step 2/4. In terms of biological role, catalyzes the isomerization between 2-isopropylmalate and 3-isopropylmalate, via the formation of 2-isopropylmaleate. The polypeptide is 3-isopropylmalate dehydratase small subunit (Shewanella baltica (strain OS223)).